The sequence spans 321 residues: Viral T-cell receptor beta chain-like T17T-22 (321 aa).

The signal sequence occupies residues M1 to A28. Positions D29–S122 are v segment. N105 is a glycosylation site (N-linked (GlcNAc...) asparagine; by host). A d segment region spans residues P123 to E128. The tract at residues Y129–V144 is j segment. The interval E145–S321 is c region. N214 and N264 each carry an N-linked (GlcNAc...) asparagine; by host glycan.

The sequence is that of Viral T-cell receptor beta chain-like T17T-22 (V-TCR) from Feline leukemia virus.